A 151-amino-acid chain; its full sequence is MASLLDKAKDFVADKLTAIPKPEGSVTDVDLKDVNRDSVEYLAKVSVTNPYSHSIPICEISFTFHSAGREIGKGKIPDPGSLKAKDMTALDIPVVVPYSILFNLARDVGVDWDIDYELQIGLTIDLPVVGEFTIPISSKGEIKLPTFKDFF.

Belongs to the LEA type 2 family.

This chain is Probable desiccation-related protein LEA14 (LEA14), found in Arabidopsis thaliana (Mouse-ear cress).